Consider the following 181-residue polypeptide: Oligoribonuclease (181 aa).

Positions 8 to 171 (LIWIDMEMTG…ADIYDSIEEL (164 aa)) constitute an Exonuclease domain. The active site involves Tyr129.

It belongs to the oligoribonuclease family.

Its subcellular location is the cytoplasm. In terms of biological role, 3'-to-5' exoribonuclease specific for small oligoribonucleotides. The chain is Oligoribonuclease from Nitrosomonas europaea (strain ATCC 19718 / CIP 103999 / KCTC 2705 / NBRC 14298).